Reading from the N-terminus, the 80-residue chain is Conotoxin Cl9.5 (80 aa).

A signal peptide spans Met1–Ala23. Positions Gly24 to Asp37 are excised as a propeptide. 3 disulfide bridges follow: Cys42-Cys59, Cys47-Cys69, and Cys49-Cys74.

Expressed by the venom duct.

The protein resides in the secreted. The chain is Conotoxin Cl9.5 from Californiconus californicus (California cone).